The chain runs to 307 residues: Aspartate carbamoyltransferase catalytic subunit (307 aa).

Carbamoyl phosphate is bound by residues R59 and T60. Residue K87 coordinates L-aspartate. Carbamoyl phosphate-binding residues include R109, H137, and Q140. R173 and R223 together coordinate L-aspartate. 2 residues coordinate carbamoyl phosphate: G266 and P267.

It belongs to the aspartate/ornithine carbamoyltransferase superfamily. ATCase family. In terms of assembly, heterododecamer (2C3:3R2) of six catalytic PyrB chains organized as two trimers (C3), and six regulatory PyrI chains organized as three dimers (R2).

The enzyme catalyses carbamoyl phosphate + L-aspartate = N-carbamoyl-L-aspartate + phosphate + H(+). Its pathway is pyrimidine metabolism; UMP biosynthesis via de novo pathway; (S)-dihydroorotate from bicarbonate: step 2/3. Its function is as follows. Catalyzes the condensation of carbamoyl phosphate and aspartate to form carbamoyl aspartate and inorganic phosphate, the committed step in the de novo pyrimidine nucleotide biosynthesis pathway. The sequence is that of Aspartate carbamoyltransferase catalytic subunit from Helicobacter pylori (strain HPAG1).